Here is a 369-residue protein sequence, read N- to C-terminus: Cobalt-precorrin-5B C(1)-methyltransferase (369 aa).

Belongs to the CbiD family.

The catalysed reaction is Co-precorrin-5B + S-adenosyl-L-methionine = Co-precorrin-6A + S-adenosyl-L-homocysteine. It functions in the pathway cofactor biosynthesis; adenosylcobalamin biosynthesis; cob(II)yrinate a,c-diamide from sirohydrochlorin (anaerobic route): step 6/10. Functionally, catalyzes the methylation of C-1 in cobalt-precorrin-5B to form cobalt-precorrin-6A. This is Cobalt-precorrin-5B C(1)-methyltransferase from Leptospira borgpetersenii serovar Hardjo-bovis (strain JB197).